Consider the following 228-residue polypeptide: MEKKPWEEDISIEEFKKSLNKDKITNLIIKRRWNKGKSTYHLSFNGDFEVVTKKPSTKYVTHKQLDQKLKEFKQDLMVELHDTFATKADLRDSEARINQKLEALVQVVLLHGEQINKLTQIVEKQGEQIRELQVEQKAQRQEFNARMDRLENLLVESIESTNKRFDSIEGRLDSMDSRLDSMENRLDSIEGRLDSVEGRLDSVEGRLDSMENRLDSMETRLDKIDPPK.

It belongs to the UPF0134 family.

In Mycoplasma pneumoniae (strain ATCC 29342 / M129 / Subtype 1) (Mycoplasmoides pneumoniae), this protein is UPF0134 protein MPN_137.